The following is a 120-amino-acid chain: NAD(P)H-quinone oxidoreductase subunit 3, chloroplastic (120 aa).

3 helical membrane-spanning segments follow: residues 9–29 (IFWTFLIIASLIPILAFWISG), 64–84 (MFALVFVVFDVETVFLYPWAM), and 88–108 (VLGVSVFIEAFIFVLILVVGL).

It belongs to the complex I subunit 3 family. NDH is composed of at least 16 different subunits, 5 of which are encoded in the nucleus.

It is found in the plastid. The protein localises to the chloroplast thylakoid membrane. It carries out the reaction a plastoquinone + NADH + (n+1) H(+)(in) = a plastoquinol + NAD(+) + n H(+)(out). The catalysed reaction is a plastoquinone + NADPH + (n+1) H(+)(in) = a plastoquinol + NADP(+) + n H(+)(out). NDH shuttles electrons from NAD(P)H:plastoquinone, via FMN and iron-sulfur (Fe-S) centers, to quinones in the photosynthetic chain and possibly in a chloroplast respiratory chain. The immediate electron acceptor for the enzyme in this species is believed to be plastoquinone. Couples the redox reaction to proton translocation, and thus conserves the redox energy in a proton gradient. This chain is NAD(P)H-quinone oxidoreductase subunit 3, chloroplastic, found in Brachypodium distachyon (Purple false brome).